The primary structure comprises 128 residues: Large ribosomal subunit protein bL19 (128 aa).

This sequence belongs to the bacterial ribosomal protein bL19 family.

Functionally, this protein is located at the 30S-50S ribosomal subunit interface and may play a role in the structure and function of the aminoacyl-tRNA binding site. This is Large ribosomal subunit protein bL19 from Verminephrobacter eiseniae (strain EF01-2).